The sequence spans 471 residues: Cell division protein FtsP (471 aa).

The tat-type signal signal peptide spans 1-27 (MSLNRRQFIQASGLALCAGMTPLAAKA). The region spanning 229–287 (VRLRLLNASNSRRYVMRLSDGRAMNVIASDQGLLPAPMAVNQLSLAPGERREILIDMSQ) is the Plastocyanin-like domain.

Belongs to the FtsP family. Post-translationally, predicted to be exported by the Tat system. The position of the signal peptide cleavage has not been experimentally proven.

The protein localises to the periplasm. Its function is as follows. Cell division protein that is required for growth during stress conditions. May be involved in protecting or stabilizing the divisomal assembly under conditions of stress. The protein is Cell division protein FtsP of Pectobacterium atrosepticum (strain SCRI 1043 / ATCC BAA-672) (Erwinia carotovora subsp. atroseptica).